The following is a 232-amino-acid chain: 5'-methylthioadenosine/S-adenosylhomocysteine nucleosidase (232 aa).

The Proton acceptor role is filled by glutamate 12. Residues glycine 78, isoleucine 152, and 173–174 each bind substrate; that span reads ME. Aspartate 197 functions as the Proton donor in the catalytic mechanism.

This sequence belongs to the PNP/UDP phosphorylase family. MtnN subfamily. Homodimer.

The catalysed reaction is S-adenosyl-L-homocysteine + H2O = S-(5-deoxy-D-ribos-5-yl)-L-homocysteine + adenine. The enzyme catalyses S-methyl-5'-thioadenosine + H2O = 5-(methylsulfanyl)-D-ribose + adenine. It carries out the reaction 5'-deoxyadenosine + H2O = 5-deoxy-D-ribose + adenine. It participates in amino-acid biosynthesis; L-methionine biosynthesis via salvage pathway; S-methyl-5-thio-alpha-D-ribose 1-phosphate from S-methyl-5'-thioadenosine (hydrolase route): step 1/2. Its function is as follows. Catalyzes the irreversible cleavage of the glycosidic bond in both 5'-methylthioadenosine (MTA) and S-adenosylhomocysteine (SAH/AdoHcy) to adenine and the corresponding thioribose, 5'-methylthioribose and S-ribosylhomocysteine, respectively. Also cleaves 5'-deoxyadenosine, a toxic by-product of radical S-adenosylmethionine (SAM) enzymes, into 5-deoxyribose and adenine. Thus, is required for in vivo function of the radical SAM enzymes biotin synthase and lipoic acid synthase, that are inhibited by 5'-deoxyadenosine accumulation. This Escherichia coli O7:K1 (strain IAI39 / ExPEC) protein is 5'-methylthioadenosine/S-adenosylhomocysteine nucleosidase.